Consider the following 416-residue polypeptide: Olfactomedin-like protein 3 (416 aa).

A signal peptide spans 1–18 (MAGIVACILLVFVTVITA). Residues 48–129 (RYSGELRDFK…KKKEKYEKIT (82 aa)) are a coiled coil. The Olfactomedin-like domain maps to 155 to 411 (YCSDTISQVT…QMLYKLNMKH (257 aa)). An intrachain disulfide couples Cys156 to Cys338. N-linked (GlcNAc...) asparagine glycosylation is found at Asn198 and Asn258.

This sequence belongs to the OLFML3 family. In terms of assembly, interacts (via coiled coil domain) with BMP1 and (via olfactomedin-like domain) CHRD.

It localises to the secreted. Its function is as follows. Secreted scaffold protein that plays an essential role in dorsoventral patterning during early development. Stabilizes axial formation by restricting chordin (CHRD) activity on the dorsal side. Acts by facilitating the association between the tolloid protease BMP1 and its substrate chordin (CHRD), leading to enhance chordin (CHRD) degradation by BMP1. In Xenopus tropicalis (Western clawed frog), this protein is Olfactomedin-like protein 3 (olfml3).